We begin with the raw amino-acid sequence, 398 residues long: MNSLDFDRKPEDTRVVVAMSGGVDSSVVAGLLKREGYDVLGITLQLYDHGAAVHRAGSCCAGQDIDDARRVCETIGIPHYVLDYEARFRETVINPFAESYIAGETPIPCVACNQTVKFADLLATAKELGADALATGHYIRSRPSPKPRYAGQRALYRPADAERDQSYFLFATTQEQIDYLRFPLGGLPKSETRALAEEMGLVVAKKADSQDICFVPQGKYSDIVSKLKPNAALAGEIVHLDGRVLGAHEGILHYTIGQRRGIGVATGEPLYVVYLDSRSRRVIVGPKEALETRRVYLRDVNWLGDEELEAAAGQGFECFAKVRSTRRPAPAVLKSDAEGLYVELVEGEAGVAPGQACALYSGTGEDARVYGGGFIRRSEREPAAEAALKALLQAPAAA.

Residues 18-25 and Leu-44 contribute to the ATP site; that span reads AMSGGVDS. The active-site Nucleophile is the Cys-112. Cys-112 and Cys-213 are oxidised to a cystine. Position 136 (Gly-136) interacts with ATP. The segment at 163–165 is interaction with tRNA; the sequence is RDQ. Cys-213 (cysteine persulfide intermediate) is an active-site residue.

It belongs to the MnmA/TRMU family.

Its subcellular location is the cytoplasm. It carries out the reaction S-sulfanyl-L-cysteinyl-[protein] + uridine(34) in tRNA + AH2 + ATP = 2-thiouridine(34) in tRNA + L-cysteinyl-[protein] + A + AMP + diphosphate + H(+). Functionally, catalyzes the 2-thiolation of uridine at the wobble position (U34) of tRNA, leading to the formation of s(2)U34. The polypeptide is tRNA-specific 2-thiouridylase MnmA (Rhizobium meliloti (strain 1021) (Ensifer meliloti)).